A 581-amino-acid chain; its full sequence is Fibrous sheath-interacting protein 1 (581 aa).

Residues 1 to 77 form a disordered region; the sequence is MDIIKGNLDG…SNDDKQESCS (77 aa). Residues 14-30 show a composition bias toward polar residues; the sequence is PASNSRIRPGSRSSNAS. The segment covering 52–77 has biased composition (basic and acidic residues); sequence GKEDHSESSNTENRRTSNDDKQESCS. S87 is subject to Phosphoserine. Residues 105 to 153 adopt a coiled-coil conformation; the sequence is EPKLKELDSQLQDAIQKMKKLDKILAKKQRREKEIKKQGLEMRIKLWEE. Disordered regions lie at residues 338 to 365 and 555 to 581; these read SSFS…VTPG and HLKL…CKEP. 2 stretches are compositionally biased toward basic and acidic residues: residues 344–360 and 569–581; these read LENR…ERNM and QETK…CKEP.

Belongs to the FSIP1 family.

The protein is Fibrous sheath-interacting protein 1 (FSIP1) of Homo sapiens (Human).